The chain runs to 163 residues: 3-hydroxyacyl-[acyl-carrier-protein] dehydratase FabZ (163 aa).

H61 is a catalytic residue.

This sequence belongs to the thioester dehydratase family. FabZ subfamily.

The protein localises to the cytoplasm. It catalyses the reaction a (3R)-hydroxyacyl-[ACP] = a (2E)-enoyl-[ACP] + H2O. Its function is as follows. Involved in unsaturated fatty acids biosynthesis. Catalyzes the dehydration of short chain beta-hydroxyacyl-ACPs and long chain saturated and unsaturated beta-hydroxyacyl-ACPs. This Dinoroseobacter shibae (strain DSM 16493 / NCIMB 14021 / DFL 12) protein is 3-hydroxyacyl-[acyl-carrier-protein] dehydratase FabZ.